We begin with the raw amino-acid sequence, 546 residues long: Probable ATP-dependent RNA helicase DDX56 (546 aa).

Residues 7–35 carry the Q motif motif; it reads LGFEHMGLDPRLLQAVTDLGWSRPTLIQE. The region spanning 38–218 is the Helicase ATP-binding domain; it reads IPLALEGKDL…ELVLHNPVTL (181 aa). 51–58 serves as a coordination point for ATP; that stretch reads ARTGSGKT. S126 is subject to Phosphoserine. Phosphothreonine is present on T141. The DEAD box signature appears at 166–169; that stretch reads DEAD. In terms of domain architecture, Helicase C-terminal spans 230–424; sequence QLQQFQVVCE…PYQFQMEEIE (195 aa). Disordered regions lie at residues 324–344 and 508–546; these read VKGKRRGRGSKGNKASDPESG and RKKRRKVPFSRKAKKVKAQNPLRDFKHRGKKPKPAAKPS. 3 stretches are compositionally biased toward basic residues: residues 325–334, 508–524, and 532–546; these read KGKRRGRGSK, RKKRRKVPFSRKAKKVK, and FKHRGKKPKPAAKPS.

The protein belongs to the DEAD box helicase family. DDX56/DBP9 subfamily. In terms of assembly, may form homooligomeric complexes. Interacts with IRF3. Interacts with OCT4 and POU5F1.

The protein localises to the nucleus. Its subcellular location is the nucleolus. It carries out the reaction ATP + H2O = ADP + phosphate + H(+). In terms of biological role, nucleolar RNA helicase that plays a role in various biological processes including innate immunity, ribosome biogenesis or nucleolus organization. Plays an essential role in maintaining nucleolar integrity in planarian stem cells. Maintains embryonic stem cells proliferation by conventional regulation of ribosome assembly and interaction with OCT4 and POU5F1 complex. Regulates antiviral innate immunity by inhibiting the virus-triggered signaling nuclear translocation of IRF3. Mechanistically, acts by disrupting the interaction between IRF3 and importin IPO5. May play a role in later stages of the processing of the pre-ribosomal particles leading to mature 60S ribosomal subunits. Has intrinsic ATPase activity. This is Probable ATP-dependent RNA helicase DDX56 (Ddx56) from Mus musculus (Mouse).